The sequence spans 501 residues: Actin nucleation-promoting factor WASL (501 aa).

Position 2 is an N-acetylserine (serine 2). In terms of domain architecture, WH1 spans 31–138; that stretch reads LGKKCVTMSS…KAVTDLLGRR (108 aa). Residues 135–158 form a disordered region; it reads LGRRQRKSEKRRDAPNGPNLPMAT. One can recognise a CRIB domain in the interval 200-213; it reads IGTPSNFQHIGHVG. A Phosphoserine; by TNK2 modification is found at serine 239. Phosphotyrosine; by FAK1 and TNK2 is present on tyrosine 253. Disordered stretches follow at residues 263 to 403 and 442 to 501; these read EAVK…GNKA and QLKS…EWED. Over residues 273–387 the composition is skewed to pro residues; sequence APPPPPPSRG…PPGPPPPPGL (115 aa). An Omega-N-methylarginine modification is found at arginine 304. WH2 domains are found at residues 401-418 and 429-446; these read NKAALLDQIREGAQLKKV and GRDALLDQIRQGIQLKSV. Positions 442 to 453 are enriched in polar residues; the sequence is QLKSVSDGQEST. Phosphoserine is present on residues serine 480 and serine 481. Over residues 482 to 501 the composition is skewed to acidic residues; that stretch reads DEDEDDDDEEDFEDDDEWED.

In terms of assembly, binds actin and the Arp2/3 complex. Interacts with CDC42. Interacts with FCHSD1. Interacts with FCHSD2. Binds to SH3 domains of GRB2. Interacts with the C-terminal SH3 domain of DNMBP. Interacts with SNX9. Interacts with the WW domains of PRPF40A/FBP11. Interacts with PTK2/FAK1. Interacts with PACSIN1, PACSIN2 and PACSIN3. Interacts with NOSTRIN. Binds to TNK2. Interacts with SNX33. Interacts with NONO (via second RRM domain); the interaction is direct. Component of a multiprotein complex with NONO and SFPQ; associates with the complex via direct interaction with NONO. In terms of processing, phosphorylation at Ser-239, Tyr-253, Ser-480 and Ser-481 enhances actin polymerization activity.

Its subcellular location is the cytoplasm. The protein localises to the cytoskeleton. It is found in the nucleus. Its function is as follows. Regulates actin polymerization by stimulating the actin-nucleating activity of the Arp2/3 complex. Involved in various processes, such as mitosis and cytokinesis, via its role in the regulation of actin polymerization. Together with CDC42, involved in the extension and maintenance of the formation of thin, actin-rich surface projections called filopodia. In addition to its role in the cytoplasm, also plays a role in the nucleus by regulating gene transcription, probably by promoting nuclear actin polymerization. Binds to HSF1/HSTF1 and forms a complex on heat shock promoter elements (HSE) that negatively regulates HSP90 expression. Plays a role in dendrite spine morphogenesis. The chain is Actin nucleation-promoting factor WASL (Wasl) from Mus musculus (Mouse).